The chain runs to 466 residues: Ribulose bisphosphate carboxylase large chain (466 aa).

Lys5 carries the N6,N6,N6-trimethyllysine modification. Residues Asn114 and Thr164 each contribute to the substrate site. The active-site Proton acceptor is Lys166. Residue Lys168 coordinates substrate. Lys192, Asp194, and Glu195 together coordinate Mg(2+). Lys192 carries the post-translational modification N6-carboxylysine. His285 acts as the Proton acceptor in catalysis. Residues Arg286, His318, and Ser370 each contribute to the substrate site.

This sequence belongs to the RuBisCO large chain family. Type I subfamily. In terms of assembly, heterohexadecamer of 8 large chains and 8 small chains; disulfide-linked. The disulfide link is formed within the large subunit homodimers. It depends on Mg(2+) as a cofactor. In terms of processing, the disulfide bond which can form in the large chain dimeric partners within the hexadecamer appears to be associated with oxidative stress and protein turnover.

It is found in the plastid. The protein localises to the chloroplast. It catalyses the reaction 2 (2R)-3-phosphoglycerate + 2 H(+) = D-ribulose 1,5-bisphosphate + CO2 + H2O. The enzyme catalyses D-ribulose 1,5-bisphosphate + O2 = 2-phosphoglycolate + (2R)-3-phosphoglycerate + 2 H(+). Functionally, ruBisCO catalyzes two reactions: the carboxylation of D-ribulose 1,5-bisphosphate, the primary event in carbon dioxide fixation, as well as the oxidative fragmentation of the pentose substrate in the photorespiration process. Both reactions occur simultaneously and in competition at the same active site. This Cercidiphyllum japonicum (Katsura tree) protein is Ribulose bisphosphate carboxylase large chain.